The chain runs to 399 residues: Maltose excess protein 1-like, chloroplastic (399 aa).

The N-terminal 67 residues, 1 to 67, are a transit peptide targeting the chloroplast; sequence MSSSVSSVRL…RRRRYALPPV (67 aa). A run of 9 helical transmembrane segments spans residues 93 to 113, 123 to 143, 154 to 174, 180 to 202, 217 to 237, 238 to 258, 268 to 288, 306 to 326, and 361 to 381; these read FAGA…ILNA, ALFA…LSLL, AVIV…QLAM, LPQF…LNYF, ITIG…VPFI, PNSL…VVMA, INFV…WMPV, AFTM…AVFI, and FLAT…RDTI.

Its subcellular location is the plastid. It localises to the chloroplast inner membrane. In terms of biological role, probable maltose transporter. Essential for the conversion of starch to sucrose in leaves at night, probably via the export of maltose from the chloroplast. The polypeptide is Maltose excess protein 1-like, chloroplastic (Oryza sativa subsp. japonica (Rice)).